Reading from the N-terminus, the 89-residue chain is Small ribosomal subunit protein uS17 (89 aa).

It belongs to the universal ribosomal protein uS17 family. Part of the 30S ribosomal subunit.

In terms of biological role, one of the primary rRNA binding proteins, it binds specifically to the 5'-end of 16S ribosomal RNA. The sequence is that of Small ribosomal subunit protein uS17 from Novosphingobium aromaticivorans (strain ATCC 700278 / DSM 12444 / CCUG 56034 / CIP 105152 / NBRC 16084 / F199).